The chain runs to 172 residues: HAD-like hydrolase superfamily protein P8B7.31 (172 aa).

Asp-14 (nucleophile) is an active-site residue. Mg(2+)-binding residues include Asp-14, Asp-16, and Asp-137. Asp-16 functions as the Proton donor in the catalytic mechanism.

The protein belongs to the HAD-like hydrolase superfamily.

Its subcellular location is the cytoplasm. The protein localises to the nucleus. The sequence is that of HAD-like hydrolase superfamily protein P8B7.31 from Schizosaccharomyces pombe (strain 972 / ATCC 24843) (Fission yeast).